A 661-amino-acid polypeptide reads, in one-letter code: DNA ligase (661 aa).

Residues 31–35 (DKEYD), 79–80 (SL), and Glu112 each bind NAD(+). Catalysis depends on Lys114, which acts as the N6-AMP-lysine intermediate. Residues Arg135, Glu169, Lys281, and Lys305 each coordinate NAD(+). Residues Cys398, Cys401, Cys414, and Cys420 each contribute to the Zn(2+) site. Residues 578 to 661 (QQENIFLGKT…ISEAEFEAML (84 aa)) enclose the BRCT domain.

It belongs to the NAD-dependent DNA ligase family. LigA subfamily. Mg(2+) serves as cofactor. Mn(2+) is required as a cofactor.

It catalyses the reaction NAD(+) + (deoxyribonucleotide)n-3'-hydroxyl + 5'-phospho-(deoxyribonucleotide)m = (deoxyribonucleotide)n+m + AMP + beta-nicotinamide D-nucleotide.. Its function is as follows. DNA ligase that catalyzes the formation of phosphodiester linkages between 5'-phosphoryl and 3'-hydroxyl groups in double-stranded DNA using NAD as a coenzyme and as the energy source for the reaction. It is essential for DNA replication and repair of damaged DNA. The protein is DNA ligase of Alkaliphilus oremlandii (strain OhILAs) (Clostridium oremlandii (strain OhILAs)).